The chain runs to 140 residues: General stress protein 26 (140 aa).

The protein is General stress protein 26 (ydaG) of Bacillus subtilis (strain 168).